Here is a 1131-residue protein sequence, read N- to C-terminus: DNA-directed RNA polymerase subunit beta (1131 aa).

The tract at residues Gln-1108–Glu-1131 is disordered. Over residues Leu-1122–Glu-1131 the composition is skewed to basic and acidic residues.

This sequence belongs to the RNA polymerase beta chain family. In cyanobacteria the RNAP catalytic core is composed of 2 alpha, 1 beta, 1 beta', 1 gamma and 1 omega subunit. When a sigma factor is associated with the core the holoenzyme is formed, which can initiate transcription.

It catalyses the reaction RNA(n) + a ribonucleoside 5'-triphosphate = RNA(n+1) + diphosphate. Functionally, DNA-dependent RNA polymerase catalyzes the transcription of DNA into RNA using the four ribonucleoside triphosphates as substrates. The polypeptide is DNA-directed RNA polymerase subunit beta (Nostoc sp. (strain PCC 7120 / SAG 25.82 / UTEX 2576)).